A 468-amino-acid chain; its full sequence is PTS system mannitol-specific EIICB component (468 aa).

At 1-25 (MNNQPSFRARVQKFGSFLSGMIMPN) the chain is on the cytoplasmic side. The PTS EIIC type-2 domain maps to 14 to 344 (FGSFLSGMIM…ILKTSKATAE (331 aa)). The helical transmembrane segment at 26–47 (IGAFIAWGLITALFIPTGWWPN) threads the bilayer. Over 48–51 (EQLA) the chain is Extracellular. A helical transmembrane segment spans residues 52 to 72 (ELVGPMITYLLPLLIGYTGGK). Residues 73-135 (MIYDVRGGVV…SGFEMLVNNF (63 aa)) lie on the Cytoplasmic side of the membrane. A helical membrane pass occupies residues 136–157 (SAGILAAILAIVAFLGIGPVVV). The Extracellular portion of the chain corresponds to 158–166 (SFSNVLASG). Residues 167-187 (VEVIIGAGLLPLASIFIEPAK) form a helical membrane-spanning segment. The Cytoplasmic segment spans residues 188–274 (VLFLNNAINH…ILMKPTLILA (87 aa)). The helical transmembrane segment at 275–294 (VIAGGMSGVFTFVLFNAGLV) threads the bilayer. Over 295-314 (AVPSPGSIFALLAMTPRGEY) the chain is Extracellular. A helical transmembrane segment spans residues 315-336 (AGVLAGVIIATVVSFVIASIIL). The Cytoplasmic segment spans residues 337–468 (KTSKATAEDL…YDELVNRLKS (132 aa)). The PTS EIIB type-2 domain maps to 380–468 (NKIIFACDAG…YDELVNRLKS (89 aa)). Catalysis depends on C386, which acts as the Phosphocysteine intermediate; for EIIB activity. C386 carries the phosphocysteine; by EIIA modification.

Homodimer.

The protein resides in the cell membrane. It catalyses the reaction D-mannitol(out) + N(pros)-phospho-L-histidyl-[protein] = D-mannitol 1-phosphate(in) + L-histidyl-[protein]. Functionally, the phosphoenolpyruvate-dependent sugar phosphotransferase system (sugar PTS), a major carbohydrate active transport system, catalyzes the phosphorylation of incoming sugar substrates concomitantly with their translocation across the cell membrane. The enzyme II CmtAB PTS system is involved in D-mannitol transport. The sequence is that of PTS system mannitol-specific EIICB component (mtlA) from Halalkalibacterium halodurans (strain ATCC BAA-125 / DSM 18197 / FERM 7344 / JCM 9153 / C-125) (Bacillus halodurans).